A 444-amino-acid polypeptide reads, in one-letter code: MNNDNTDYVSNESGTLSRLFKLPQHGTTVRTELIAGMTTFLTMVYIVFVNPQILGAAQMDPKVVFVTTCLIAGIGSIAMGIFANLPVALAPAMGLNAFFAFVVVGAMGISWQTGMGAIFWGAVGLFLLTLFRIRYWMISNIPLSLRIGITSGIGLFIALMGLKNTGVIVANKDTLVMIGDLSSHGVLLGILGFFIITVLSSRHFHAAVLVSIVVTSCCGLFFGDVHFSGVYSIPPDISGVIGEVDLSGALTLELAGIIFSFMLINLFDSSGTLIGVTDKAGLIDGNGKFPNMNKALYVDSVSSVAGAFIGTSSVTAYIESTSGVAVGGRTGLTAVVVGVMFLLVMFFSPLVAIVPPYATAGALIFVGVLMTSSLARVNWDDFTESVPAFITTVMMPFTFSITEGIALGFMSYCIMKVCTGRWRDLNLCVVVVAALFALKIILVD.

Residues 1–29 (MNNDNTDYVSNESGTLSRLFKLPQHGTTV) lie on the Cytoplasmic side of the membrane. A helical transmembrane segment spans residues 30–53 (RTELIAGMTTFLTMVYIVFVNPQI). Residues 54-63 (LGAAQMDPKV) are Periplasmic-facing. The helical transmembrane segment at 64–82 (VFVTTCLIAGIGSIAMGIF) threads the bilayer. At 83 to 84 (AN) the chain is on the cytoplasmic side. A discontinuously helical membrane pass occupies residues 85–101 (LPVALAPAMGLNAFFAF). Over 102–113 (VVVGAMGISWQT) the chain is Periplasmic. A helical membrane pass occupies residues 114–133 (GMGAIFWGAVGLFLLTLFRI). Over 134–145 (RYWMISNIPLSL) the chain is Cytoplasmic. Residues 146–166 (RIGITSGIGLFIALMGLKNTG) traverse the membrane as a helical segment. Residues 167 to 182 (VIVANKDTLVMIGDLS) are Periplasmic-facing. The helical transmembrane segment at 183-200 (SHGVLLGILGFFIITVLS) threads the bilayer. At 201–204 (SRHF) the chain is on the cytoplasmic side. Residues 205–223 (HAAVLVSIVVTSCCGLFFG) form a helical membrane-spanning segment. The Periplasmic segment spans residues 224-251 (DVHFSGVYSIPPDISGVIGEVDLSGALT). The chain crosses the membrane as a helical span at residues 252 to 280 (LELAGIIFSFMLINLFDSSGTLIGVTDKA). Over 281–293 (GLIDGNGKFPNMN) the chain is Cytoplasmic. The chain crosses the membrane as a helical span at residues 294–309 (KALYVDSVSSVAGAFI). The Periplasmic portion of the chain corresponds to 310–311 (GT). Residues 312–327 (SSVTAYIESTSGVAVG) form a discontinuously helical membrane-spanning segment. At 328-331 (GRTG) the chain is on the cytoplasmic side. A helical membrane pass occupies residues 332 to 346 (LTAVVVGVMFLLVMF). Residues 347–357 (FSPLVAIVPPY) are Periplasmic-facing. Residues 358–377 (ATAGALIFVGVLMTSSLARV) traverse the membrane as a helical segment. At 378-382 (NWDDF) the chain is on the cytoplasmic side. Residues 383–418 (TESVPAFITTVMMPFTFSITEGIALGFMSYCIMKVC) constitute an intramembrane region (discontinuously helical). Topologically, residues 419–444 (TGRWRDLNLCVVVVAALFALKIILVD) are cytoplasmic.

Belongs to the nucleobase:cation symporter-2 (NCS2) (TC 2.A.40) family. Azg-like subfamily.

It is found in the cell inner membrane. Its function is as follows. High-affinity transporter for adenine. In Escherichia coli (strain K12), this protein is Adenine permease AdeQ (adeQ).